The sequence spans 191 residues: MSLSPHQKTAGGLVLVVAVMGAASFAAVPFYNWFCRVTGFAGTTAVATEAPAEVLDRTVKVRFDASREAGMPWEFRPLQREMELKIGETGLAFYEAYNPTDRTVAGTASYNVTPDAAGGYFAKIACFCFTEQVLAPGERVEMPVTFYVDPAIIDDPDGRYVRQITLSYTFHETALTEEQAALAAESATDVN.

At 1–9 (MSLSPHQKT) the chain is on the cytoplasmic side. A helical; Signal-anchor for type II membrane protein transmembrane segment spans residues 10–30 (AGGLVLVVAVMGAASFAAVPF). Residues 31 to 191 (YNWFCRVTGF…LAAESATDVN (161 aa)) lie on the Periplasmic side of the membrane.

Belongs to the COX11/CtaG family.

The protein resides in the cell inner membrane. Functionally, exerts its effect at some terminal stage of cytochrome c oxidase synthesis, probably by being involved in the insertion of the copper B into subunit I. The polypeptide is Cytochrome c oxidase assembly protein CtaG (Cereibacter sphaeroides (strain ATCC 17029 / ATH 2.4.9) (Rhodobacter sphaeroides)).